The sequence spans 382 residues: MLRWTVHLEGGPRRVNHAAVAVGHRVYSFGGYCSGEDYETLRQIDVHIFNAVSLRWTKLPPVRPAARGQAPVVPYMRYGHSTVLIDDTVFLWGGRNDTEGACNVLYAFDVNTHKWSTPRVSGTVPGARDGHSACVLGKTMYIFGGYEQLADCFSNDIHKLDTSTMTWTLICTKGNPARWRDFHSATMLGSHMYVFGGRADRFGPFHSNNEIYCNRIRVFDTRTEAWLDCPPTPVLPEGRRSHSAFGYNGELYIFGGYNARLNRHFHDLWKFNPVSFTWKKIEPKGKGPCPRRRQCCCIVGDKIVLFGGTSPSPEEGLGDEFDLIDHSDLHILDFSPSLKTLCKLAVIQYNLDQSCLPHDIRWELNAMTTNSNISRPIVSSHG.

Kelch repeat units follow at residues 25–77 (RVYS…PYMR), 88–138 (TVFL…VLGK), 139–189 (TMYI…TMLG), 191–249 (HMYV…GYNG), and 251–301 (LYIF…IVGD).

Component of a CRL2(KLHDC3) complex, also named ECS(KLHDC3) complex, composed of CUL2, Elongin BC (ELOB and ELOC), RBX1 and substrate-specific adapter KLHDC3. May form oligomers as a KLHDC3-ELOB-ELOC complex; this interaction is likely autoinhibitory for the E3 ligase complex.

It localises to the cytoplasm. The protein operates within protein modification; protein ubiquitination. In terms of biological role, substrate-recognition component of a Cul2-RING (CRL2) E3 ubiquitin-protein ligase complex of the DesCEND (destruction via C-end degrons) pathway, which recognizes a C-degron located at the extreme C terminus of target proteins, leading to their ubiquitination and degradation. The C-degron recognized by the DesCEND pathway is usually a motif of less than ten residues and can be present in full-length proteins, truncated proteins or proteolytically cleaved forms. The CRL2(KLHDC3) complex specifically recognizes proteins with a glycine (Gly) at the C-terminus, leading to their ubiquitination and degradation: recognizes the C-terminal -Arg-(Xaa)n-Arg-Gly, -Arg-(Xaa)n-Lys-Gly, and -Arg-(Xaa)n-Gln-Gly degrons. The CRL2(KLHDC3) complex mediates ubiquitination and degradation of truncated SELENOV and SEPHS2 selenoproteins produced by failed UGA/Sec decoding, which end with a glycine. May be involved in meiotic recombination process. This Bos taurus (Bovine) protein is Kelch domain-containing protein 3.